We begin with the raw amino-acid sequence, 316 residues long: Sulfate adenylyltransferase subunit 2 (316 aa).

The segment at 297–316 (RAIDRDQSGSMEKKKREGYF) is disordered.

The protein belongs to the PAPS reductase family. CysD subfamily. Heterodimer composed of CysD, the smaller subunit, and CysN.

The catalysed reaction is sulfate + ATP + H(+) = adenosine 5'-phosphosulfate + diphosphate. It participates in sulfur metabolism; hydrogen sulfide biosynthesis; sulfite from sulfate: step 1/3. With CysN forms the ATP sulfurylase (ATPS) that catalyzes the adenylation of sulfate producing adenosine 5'-phosphosulfate (APS) and diphosphate, the first enzymatic step in sulfur assimilation pathway. APS synthesis involves the formation of a high-energy phosphoric-sulfuric acid anhydride bond driven by GTP hydrolysis by CysN coupled to ATP hydrolysis by CysD. This chain is Sulfate adenylyltransferase subunit 2, found in Allorhizobium ampelinum (strain ATCC BAA-846 / DSM 112012 / S4) (Agrobacterium vitis (strain S4)).